A 546-amino-acid polypeptide reads, in one-letter code: Glutamate--tRNA ligase (546 aa).

The 'HIGH' region motif lies at 42–52; it reads PSPTGFIHLGN. Residues 293-297 carry the 'KMSKS' region motif; sequence KLSKR. Position 296 (lysine 296) interacts with ATP.

The protein belongs to the class-I aminoacyl-tRNA synthetase family. Glutamate--tRNA ligase type 1 subfamily. In terms of assembly, monomer.

Its subcellular location is the cytoplasm. The enzyme catalyses tRNA(Glu) + L-glutamate + ATP = L-glutamyl-tRNA(Glu) + AMP + diphosphate. Catalyzes the attachment of glutamate to tRNA(Glu) in a two-step reaction: glutamate is first activated by ATP to form Glu-AMP and then transferred to the acceptor end of tRNA(Glu). The polypeptide is Glutamate--tRNA ligase (Acetivibrio thermocellus (strain ATCC 27405 / DSM 1237 / JCM 9322 / NBRC 103400 / NCIMB 10682 / NRRL B-4536 / VPI 7372) (Clostridium thermocellum)).